The primary structure comprises 226 residues: Small ribosomal subunit protein uS3 (226 aa).

Positions 39–109 constitute a KH type-2 domain; the sequence is IYKFFDKFTR…KLDVNLKVLT (71 aa).

The protein belongs to the universal ribosomal protein uS3 family. Part of the 30S ribosomal subunit. Forms a tight complex with proteins S10 and S14.

Functionally, binds the lower part of the 30S subunit head. Binds mRNA in the 70S ribosome, positioning it for translation. The polypeptide is Small ribosomal subunit protein uS3 (Mycoplasmopsis synoviae (strain 53) (Mycoplasma synoviae)).